The sequence spans 416 residues: Glyceraldehyde-3-phosphate dehydrogenase, chloroplastic (416 aa).

A chloroplast-targeting transit peptide spans 1–78 (MAFVAPVSSV…APARTSNAPS (78 aa)). NADP(+) is bound by residues 90–91 (RI), aspartate 114, and arginine 158. D-glyceraldehyde 3-phosphate is bound by residues 232 to 234 (SCT), threonine 263, arginine 278, 291 to 292 (TG), and arginine 314. The active-site Nucleophile is cysteine 233. Residue asparagine 396 coordinates NADP(+).

Belongs to the glyceraldehyde-3-phosphate dehydrogenase family. In terms of assembly, homotetramer.

The protein resides in the plastid. It is found in the chloroplast. It catalyses the reaction D-glyceraldehyde 3-phosphate + phosphate + NADP(+) = (2R)-3-phospho-glyceroyl phosphate + NADPH + H(+). It participates in carbohydrate biosynthesis; Calvin cycle. The sequence is that of Glyceraldehyde-3-phosphate dehydrogenase, chloroplastic (GAPA) from Gracilaria gracilis (Red alga).